The sequence spans 344 residues: Dihydroorotase (344 aa).

Residues histidine 13 and histidine 15 each coordinate Zn(2+). Substrate contacts are provided by residues 15–17 (HLR) and asparagine 41. Zn(2+)-binding residues include lysine 98, histidine 135, and histidine 173. Lysine 98 carries the N6-carboxylysine modification. Histidine 135 provides a ligand contact to substrate. Leucine 218 lines the substrate pocket. Aspartate 247 is a Zn(2+) binding site. Residue aspartate 247 is part of the active site. Positions 251 and 263 each coordinate substrate.

Belongs to the metallo-dependent hydrolases superfamily. DHOase family. Class II DHOase subfamily. In terms of assembly, homodimer. Requires Zn(2+) as cofactor.

The catalysed reaction is (S)-dihydroorotate + H2O = N-carbamoyl-L-aspartate + H(+). The protein operates within pyrimidine metabolism; UMP biosynthesis via de novo pathway; (S)-dihydroorotate from bicarbonate: step 3/3. In terms of biological role, catalyzes the reversible cyclization of carbamoyl aspartate to dihydroorotate. In Neisseria meningitidis serogroup C (strain 053442), this protein is Dihydroorotase.